Consider the following 335-residue polypeptide: Histidinol-phosphatase (335 aa).

It belongs to the PHP hydrolase family. HisK subfamily.

It carries out the reaction L-histidinol phosphate + H2O = L-histidinol + phosphate. It functions in the pathway amino-acid biosynthesis; L-histidine biosynthesis; L-histidine from 5-phospho-alpha-D-ribose 1-diphosphate: step 8/9. In Saccharomyces cerevisiae (strain ATCC 204508 / S288c) (Baker's yeast), this protein is Histidinol-phosphatase (HIS2).